Reading from the N-terminus, the 299-residue chain is Taste receptor type 2 member 1 (299 aa).

At 1–9 the chain is on the extracellular side; that stretch reads MLESHLIIY. A helical transmembrane segment spans residues 10 to 30; that stretch reads FLLAVIQFLLGIFTNGIIVVV. At 31 to 55 the chain is on the cytoplasmic side; sequence NGIDLIKHRKMAPLDLLLSCLAVSR. Residues 56–76 traverse the membrane as a helical segment; that stretch reads IFLQLFIFYVNVIVIFFIEFI. Topologically, residues 77-81 are extracellular; it reads MCSAN. A helical transmembrane segment spans residues 82–102; sequence CAILLFVNELELWLATWLGVF. Over 103-124 the chain is Cytoplasmic; that stretch reads YCAKVASVRHPLFIWLKMRISK. A helical transmembrane segment spans residues 125-145; that stretch reads LVPWMILGSLLYVSMICVFHS. The Extracellular portion of the chain corresponds to 146-178; the sequence is KYAGFMVPHFLRNFFSQNATIQKEDTLAIQIFS. The N-linked (GlcNAc...) asparagine glycan is linked to Asn163. The helical transmembrane segment at 179-199 threads the bilayer; sequence FVAEFSVPLLIFLVAVLLLIF. Residues 200 to 222 lie on the Cytoplasmic side of the membrane; it reads SLGRHTRQMRNTVAGSRVPGRGA. Residues 223-243 traverse the membrane as a helical segment; that stretch reads PISALLSILSFLILYFSHCMI. The Extracellular portion of the chain corresponds to 244–257; that stretch reads KVFLSSLKFHVRRF. Residues 258–278 traverse the membrane as a helical segment; the sequence is IFLFFILVIGIYPSGHSLILI. Over 279 to 299 the chain is Cytoplasmic; it reads LGNPKLKQNAKKFLLHSKCCQ.

It belongs to the G-protein coupled receptor T2R family.

It is found in the membrane. Receptor that may play a role in the perception of bitterness and is gustducin-linked. May play a role in sensing the chemical composition of the gastrointestinal content. The activity of this receptor may stimulate alpha gustducin, mediate PLC-beta-2 activation and lead to the gating of TRPM5. In Pan paniscus (Pygmy chimpanzee), this protein is Taste receptor type 2 member 1 (TAS2R1).